A 71-amino-acid polypeptide reads, in one-letter code: Protein cef (71 aa).

Plays a role in the processing of a cluster of viral tRNAs. This chain is Protein cef (cef), found in Escherichia coli (Bacteriophage T4).